Here is a 62-residue protein sequence, read N- to C-terminus: Disintegrin atropoimin (62 aa).

A Disintegrin domain is found at 1-62 (EAGEECDCGT…ADCPRNGLYG (62 aa)). 5 disulfide bridges follow: Cys6/Cys21, Cys8/Cys16, Cys15/Cys38, Cys29/Cys35, and Cys34/Cys48. A Cell attachment site motif is present at residues 41-42 (GD).

It belongs to the venom metalloproteinase (M12B) family. P-II subfamily. P-IIa sub-subfamily. As to quaternary structure, monomer. Expressed by the venom gland.

The protein localises to the secreted. Functionally, inhibits ADP- (IC(50)=63 nM) and collagen-induced (IC(50)=53 nM) aggregation of human platelets. In vitro, inhibits adhesion of endothelial cells to vitronectin, type-I collagen and, to a lower degree, fibronectin and laminin. The chain is Disintegrin atropoimin from Metlapilcoatlus mexicanus (Central American jumping pitviper).